The following is a 122-amino-acid chain: Proximal tubules-expressed gene protein (122 aa).

A helical transmembrane segment spans residues 33 to 53; the sequence is WLTGLIAMTVFLFLVLVVYVA.

This sequence belongs to the PDZK1-interacting protein 1/SMIM24 family. As to expression, expressed in prospective pronephric mesoderm at the late gastrula stage. After neurulation, expressed in the intermediate mesoderm, eye placode and blood islands. Expression becomes restricted to the pronephric proximal tubule during embryogenesis, but is absent from the connecting tubules.

It localises to the membrane. In terms of biological role, essential for pronephric tubule development, acting upstream of pax8 and lhx1/lim1 and downstream of retinoic acid signaling to induce pronephric mesoderm to form pronephric tubule-specific cells. The chain is Proximal tubules-expressed gene protein (pteg) from Xenopus laevis (African clawed frog).